A 608-amino-acid chain; its full sequence is Granule-bound starch synthase 1, chloroplastic/amyloplastic (608 aa).

Residues 1–78 (MATVIAAHFV…NGRPAAKIIC (78 aa)) constitute a chloroplast transit peptide. Lys96 provides a ligand contact to ADP-alpha-D-glucose. The interval 587–608 (GSEPGTEGEEIAPLAKENVPTP) is disordered.

It belongs to the glycosyltransferase 1 family. Bacterial/plant glycogen synthase subfamily. Synthesized in a number of different organs, but most abundantly in tubers.

It localises to the plastid. The protein localises to the chloroplast. Its subcellular location is the amyloplast. It carries out the reaction an NDP-alpha-D-glucose + [(1-&gt;4)-alpha-D-glucosyl](n) = [(1-&gt;4)-alpha-D-glucosyl](n+1) + a ribonucleoside 5'-diphosphate + H(+). It functions in the pathway glycan biosynthesis; starch biosynthesis. Responsible for the synthesis of amylose in reserve starch. This is Granule-bound starch synthase 1, chloroplastic/amyloplastic (WAXY) from Manihot esculenta (Cassava).